The primary structure comprises 475 residues: Isocitrate dehydrogenase [NADP] (475 aa).

Residue Thr104 participates in NADP(+) binding. The D-threo-isocitrate site is built by Ser113, Asn115, Arg119, Arg129, and Arg153. Residue Asp362 participates in Mg(2+) binding. NADP(+) contacts are provided by residues His394–His400, Asn407, Tyr446, and Arg450.

This sequence belongs to the isocitrate and isopropylmalate dehydrogenases family. As to quaternary structure, homodimer. Mg(2+) is required as a cofactor. Mn(2+) serves as cofactor.

The protein resides in the cytoplasm. It catalyses the reaction D-threo-isocitrate + NADP(+) = 2-oxoglutarate + CO2 + NADPH. With respect to regulation, inhibited non-competitively by ADP and 2-oxoglutarate, with respect to isocitrate and in a competitive manner by NADPH. In terms of biological role, catalyzes the oxidative decarboxylation of isocitrate to 2-oxoglutarate and carbon dioxide with the concomitant reduction of NADP(+). Is specific for NADP(+), cannot use NAD(+). The chain is Isocitrate dehydrogenase [NADP] from Synechocystis sp. (strain ATCC 27184 / PCC 6803 / Kazusa).